Reading from the N-terminus, the 93-residue chain is MGESQPVKTFDALFDELTERARTRPEGSGTVAALDGGVHGLGKKILEEAGEVWLAAEHESDEALAEEISQLLYWTQVLMIARGLSPDDVYRKL.

Belongs to the PRA-PH family.

The protein resides in the cytoplasm. The enzyme catalyses 1-(5-phospho-beta-D-ribosyl)-ATP + H2O = 1-(5-phospho-beta-D-ribosyl)-5'-AMP + diphosphate + H(+). It participates in amino-acid biosynthesis; L-histidine biosynthesis; L-histidine from 5-phospho-alpha-D-ribose 1-diphosphate: step 2/9. The sequence is that of Phosphoribosyl-ATP pyrophosphatase from Mycobacterium sp. (strain JLS).